The primary structure comprises 254 residues: Type III pantothenate kinase (254 aa).

Asp6–Val13 provides a ligand contact to ATP. Residues Tyr100 and Gly107–Arg110 contribute to the substrate site. Asp109 functions as the Proton acceptor in the catalytic mechanism. Asp129 contacts K(+). Thr132 provides a ligand contact to ATP. Thr184 contributes to the substrate binding site.

This sequence belongs to the type III pantothenate kinase family. Homodimer. The cofactor is NH4(+). Requires K(+) as cofactor.

It is found in the cytoplasm. The enzyme catalyses (R)-pantothenate + ATP = (R)-4'-phosphopantothenate + ADP + H(+). It participates in cofactor biosynthesis; coenzyme A biosynthesis; CoA from (R)-pantothenate: step 1/5. Catalyzes the phosphorylation of pantothenate (Pan), the first step in CoA biosynthesis. The chain is Type III pantothenate kinase from Citrifermentans bemidjiense (strain ATCC BAA-1014 / DSM 16622 / JCM 12645 / Bem) (Geobacter bemidjiensis).